We begin with the raw amino-acid sequence, 171 residues long: MMNEDGAYSKKDLEASSRGELFGPKGPRLPASNMLMIDRVITMTKDGGMHGKGYVEAELDVHPNLWFFGCHFIDDPVMPGCLGLDAMWQLVGFYLGWLENEGKGRALGVGEVKFKGQVLPDSKKITYCIDFKKVITGKLIMGIADGKVLSDGQQIYTADDLKVGLFKNTSF.

Histidine 71 is an active-site residue.

This sequence belongs to the thioester dehydratase family. FabA subfamily. In terms of assembly, homodimer.

Its subcellular location is the cytoplasm. The enzyme catalyses a (3R)-hydroxyacyl-[ACP] = a (2E)-enoyl-[ACP] + H2O. The catalysed reaction is (3R)-hydroxydecanoyl-[ACP] = (2E)-decenoyl-[ACP] + H2O. It carries out the reaction (2E)-decenoyl-[ACP] = (3Z)-decenoyl-[ACP]. Its pathway is lipid metabolism; fatty acid biosynthesis. In terms of biological role, necessary for the introduction of cis unsaturation into fatty acids. Catalyzes the dehydration of (3R)-3-hydroxydecanoyl-ACP to E-(2)-decenoyl-ACP and then its isomerization to Z-(3)-decenoyl-ACP. Can catalyze the dehydratase reaction for beta-hydroxyacyl-ACPs with saturated chain lengths up to 16:0, being most active on intermediate chain length. This Hamiltonella defensa subsp. Acyrthosiphon pisum (strain 5AT) protein is 3-hydroxydecanoyl-[acyl-carrier-protein] dehydratase.